The sequence spans 539 residues: UDP-N-acetylmuramate--L-alanine ligase (539 aa).

165-171 (GTHGKTT) is an ATP binding site.

It belongs to the MurCDEF family.

The protein resides in the cytoplasm. The catalysed reaction is UDP-N-acetyl-alpha-D-muramate + L-alanine + ATP = UDP-N-acetyl-alpha-D-muramoyl-L-alanine + ADP + phosphate + H(+). The protein operates within cell wall biogenesis; peptidoglycan biosynthesis. In terms of biological role, cell wall formation. This chain is UDP-N-acetylmuramate--L-alanine ligase, found in Trichodesmium erythraeum (strain IMS101).